The chain runs to 344 residues: Methionine aminopeptidase 1C, chloroplastic/mitochondrial (344 aa).

Residue His172 participates in substrate binding. A divalent metal cation-binding residues include Asp189, Asp200, and His262. His269 contributes to the substrate binding site. Residues Glu296 and Glu327 each contribute to the a divalent metal cation site.

Belongs to the peptidase M24A family. Methionine aminopeptidase type 1 subfamily. Co(2+) is required as a cofactor. Requires Zn(2+) as cofactor. Mn(2+) serves as cofactor. The cofactor is Fe(2+). As to expression, ubiquitous.

The protein resides in the plastid. The protein localises to the chloroplast. It is found in the mitochondrion. The catalysed reaction is Release of N-terminal amino acids, preferentially methionine, from peptides and arylamides.. In terms of biological role, removes the N-terminal methionine from nascent proteins. The N-terminal methionine is often cleaved when the second residue in the primary sequence is small and uncharged (Met-Ala-, Cys, Gly, Pro, Ser, Thr, or Val). The sequence is that of Methionine aminopeptidase 1C, chloroplastic/mitochondrial (MAP1C) from Arabidopsis thaliana (Mouse-ear cress).